The sequence spans 342 residues: tRNA N6-adenosine threonylcarbamoyltransferase (342 aa).

Fe cation is bound by residues His115 and His119. Residues 137–141 (IVSGG), Asp170, Gly183, Asp187, and Asn276 each bind substrate. A Fe cation-binding site is contributed by Asp304.

The protein belongs to the KAE1 / TsaD family. Fe(2+) serves as cofactor.

Its subcellular location is the cytoplasm. The enzyme catalyses L-threonylcarbamoyladenylate + adenosine(37) in tRNA = N(6)-L-threonylcarbamoyladenosine(37) in tRNA + AMP + H(+). Its function is as follows. Required for the formation of a threonylcarbamoyl group on adenosine at position 37 (t(6)A37) in tRNAs that read codons beginning with adenine. Is involved in the transfer of the threonylcarbamoyl moiety of threonylcarbamoyl-AMP (TC-AMP) to the N6 group of A37, together with TsaE and TsaB. TsaD likely plays a direct catalytic role in this reaction. The sequence is that of tRNA N6-adenosine threonylcarbamoyltransferase from Staphylococcus haemolyticus (strain JCSC1435).